The sequence spans 216 residues: Probable transaldolase (216 aa).

Lys-83 acts as the Schiff-base intermediate with substrate in catalysis.

It belongs to the transaldolase family. Type 3B subfamily.

It localises to the cytoplasm. It carries out the reaction D-sedoheptulose 7-phosphate + D-glyceraldehyde 3-phosphate = D-erythrose 4-phosphate + beta-D-fructose 6-phosphate. Its pathway is carbohydrate degradation; pentose phosphate pathway; D-glyceraldehyde 3-phosphate and beta-D-fructose 6-phosphate from D-ribose 5-phosphate and D-xylulose 5-phosphate (non-oxidative stage): step 2/3. In terms of biological role, transaldolase is important for the balance of metabolites in the pentose-phosphate pathway. This Sphingopyxis alaskensis (strain DSM 13593 / LMG 18877 / RB2256) (Sphingomonas alaskensis) protein is Probable transaldolase.